Here is a 473-residue protein sequence, read N- to C-terminus: Deoxyribodipyrimidine photo-lyase (473 aa).

One can recognise a Photolyase/cryptochrome alpha/beta domain in the interval 2–134 (PTHLVWFRRD…ICEGFDDSVI (133 aa)). (6R)-5,10-methylene-5,6,7,8-tetrahydrofolate-binding residues include N109 and E110. Y224 contributes to the FAD binding site. R228 is a binding site for DNA. An FAD-binding site is contributed by 236 to 240 (TSRLS). 2 interaction with DNA regions span residues 276 to 283 (ELIWREFY) and 343 to 344 (NR). An FAD-binding site is contributed by 374-376 (DGD). Residue Q406 coordinates DNA.

Belongs to the DNA photolyase class-1 family. As to quaternary structure, monomer. It depends on FAD as a cofactor. (6R)-5,10-methylene-5,6,7,8-tetrahydrofolate is required as a cofactor.

The catalysed reaction is cyclobutadipyrimidine (in DNA) = 2 pyrimidine residues (in DNA).. Functionally, involved in repair of UV radiation-induced DNA damage. Catalyzes the light-dependent monomerization (300-600 nm) of cyclobutyl pyrimidine dimers (in cis-syn configuration), which are formed between adjacent bases on the same DNA strand upon exposure to ultraviolet radiation. This Salmonella typhimurium (strain LT2 / SGSC1412 / ATCC 700720) protein is Deoxyribodipyrimidine photo-lyase (phrB).